Here is a 170-residue protein sequence, read N- to C-terminus: Small ribosomal subunit protein uS15 (170 aa).

Over residues 1–10 (MARMHSRKKG) the composition is skewed to basic residues. A disordered region spans residues 1–20 (MARMHSRKKGSSGSRPPVVD).

Belongs to the universal ribosomal protein uS15 family. In terms of assembly, part of the 30S ribosomal subunit.

In Methanothrix thermoacetophila (strain DSM 6194 / JCM 14653 / NBRC 101360 / PT) (Methanosaeta thermophila), this protein is Small ribosomal subunit protein uS15.